A 348-amino-acid polypeptide reads, in one-letter code: Phospho-2-dehydro-3-deoxyheptonate aldolase, Trp-sensitive (348 aa).

The protein belongs to the class-I DAHP synthase family.

The catalysed reaction is D-erythrose 4-phosphate + phosphoenolpyruvate + H2O = 7-phospho-2-dehydro-3-deoxy-D-arabino-heptonate + phosphate. It functions in the pathway metabolic intermediate biosynthesis; chorismate biosynthesis; chorismate from D-erythrose 4-phosphate and phosphoenolpyruvate: step 1/7. In terms of biological role, stereospecific condensation of phosphoenolpyruvate (PEP) and D-erythrose-4-phosphate (E4P) giving rise to 3-deoxy-D-arabino-heptulosonate-7-phosphate (DAHP). This chain is Phospho-2-dehydro-3-deoxyheptonate aldolase, Trp-sensitive (aroH), found in Buchnera aphidicola subsp. Acyrthosiphon pisum (strain APS) (Acyrthosiphon pisum symbiotic bacterium).